A 230-amino-acid chain; its full sequence is Large ribosomal subunit protein uL1 (230 aa).

Belongs to the universal ribosomal protein uL1 family. Part of the 50S ribosomal subunit.

Its function is as follows. Binds directly to 23S rRNA. The L1 stalk is quite mobile in the ribosome, and is involved in E site tRNA release. Protein L1 is also a translational repressor protein, it controls the translation of the L11 operon by binding to its mRNA. This is Large ribosomal subunit protein uL1 from Leptospira borgpetersenii serovar Hardjo-bovis (strain JB197).